We begin with the raw amino-acid sequence, 533 residues long: Acetone monooxygenase (methyl acetate-forming) (533 aa).

FAD contacts are provided by residues Thr-43–Trp-46, Asp-55–Ser-56, and Tyr-61. Arg-53–Asp-55 lines the NADP(+) pocket. NADP(+) is bound by residues Asn-183 to Gln-189, Arg-206 to Thr-207, and Trp-492.

It belongs to the FAD-binding monooxygenase family. As to quaternary structure, homotetramer. Requires FAD as cofactor.

It catalyses the reaction acetone + NADPH + O2 + H(+) = methyl acetate + NADP(+) + H2O. Plays an important role in the metabolism of acetone derived from propane oxidation. Catalyzes the oxidation of acetone to methyl acetate. Exhibits high catalytic efficiency towards various linear and cyclic ketones, such as butanone, 2-pentanone, 2-heptanone, 2-octanone, 2-nonanone, 2-decanone, cyclobutanone, cyclopentanone and cyclohexanone. Elicits the highest catalytic efficiency towards butanone and cyclobutanone. Is highly specific for NADPH and cannot use NADH. The chain is Acetone monooxygenase (methyl acetate-forming) from Gordonia sp. (strain TY-5).